A 424-amino-acid chain; its full sequence is MSYVIDRRLNGKNKSTVNRQRFLRRYRDHIKKAVEEAVSRRSITDMEHGEQISIPGRDIDEPVLHHGRGGKQTVVHPGNKEFTAGEHIARPQGGGGGGGGRGKAGNSGEGMDEFVFQITQEEFLEFMFEDLELPNLVKRNLTGTDTFKTVRAGISNEGNPARINIIRTLRSAHARRIALSGSSRAKLREAKEELARLKREEPDNFGDIQELEAEIERLSARIHRVPFLDTFDLKYNLLVKQPNPSSKAVMFCLMDVSGSMTQATKDIAKRFFILLYLFLKRNYDKIDVVFIRHHTSAREVDEEEFFYSRETGGTIVSSALKLMQEIMAERYPSNEWNIYAAQASDGDNWNDDSPICRDILINQIMPFVQYYTYVEITPREHQALWFEYERIAEAFSDTFAQQQLVSAGDIYPVFRELFQRRLVT.

Residues 85–108 form a disordered region; sequence GEHIARPQGGGGGGGGRGKAGNSG. Positions 92–108 are enriched in gly residues; that stretch reads QGGGGGGGGRGKAGNSG.

It belongs to the UPF0229 family.

This Pseudomonas fluorescens (strain ATCC BAA-477 / NRRL B-23932 / Pf-5) protein is UPF0229 protein PFL_5654.